The primary structure comprises 97 residues: Large ribosomal subunit protein uL23 (97 aa).

The protein belongs to the universal ribosomal protein uL23 family. As to quaternary structure, part of the 50S ribosomal subunit. Contacts protein L29, and trigger factor when it is bound to the ribosome.

Functionally, one of the early assembly proteins it binds 23S rRNA. One of the proteins that surrounds the polypeptide exit tunnel on the outside of the ribosome. Forms the main docking site for trigger factor binding to the ribosome. The sequence is that of Large ribosomal subunit protein uL23 from Thermoanaerobacter pseudethanolicus (strain ATCC 33223 / 39E) (Clostridium thermohydrosulfuricum).